The following is a 348-amino-acid chain: L-asparaginase 2 (348 aa).

The first 22 residues, 1-22 (MEFFKKTALAALVMGFSGAALA), serve as a signal peptide directing secretion. The Asparaginase/glutaminase domain maps to 24-348 (PNITILATGG…QQIQQIFNQY (325 aa)). The active-site O-isoaspartyl threonine intermediate is Thr34. Residues 80-81 (SQ) and 111-112 (TD) each bind substrate. Cys99 and Cys127 are joined by a disulfide.

This sequence belongs to the asparaginase 1 family. In terms of assembly, homotetramer.

It localises to the periplasm. It catalyses the reaction L-asparagine + H2O = L-aspartate + NH4(+). The polypeptide is L-asparaginase 2 (ansB) (Escherichia coli (strain K12)).